The following is a 339-amino-acid chain: Tryptophan--tRNA ligase (339 aa).

Residues 11–13 (QPT) and 19–20 (GN) each bind ATP. Residues 12–20 (PTGAIHIGN) carry the 'HIGH' region motif. Position 135 (D135) interacts with L-tryptophan. ATP-binding positions include 147 to 149 (GED), I191, and 200 to 204 (KMSKS). Residues 200 to 204 (KMSKS) carry the 'KMSKS' region motif.

The protein belongs to the class-I aminoacyl-tRNA synthetase family. As to quaternary structure, homodimer.

The protein resides in the cytoplasm. The catalysed reaction is tRNA(Trp) + L-tryptophan + ATP = L-tryptophyl-tRNA(Trp) + AMP + diphosphate + H(+). In terms of biological role, catalyzes the attachment of tryptophan to tRNA(Trp). This is Tryptophan--tRNA ligase from Prochlorococcus marinus (strain SARG / CCMP1375 / SS120).